Reading from the N-terminus, the 688-residue chain is MIOREX complex component 1 (688 aa).

A disordered region spans residues 1–24 (MGLKITKGQLRTKDLNQSSSKSSQ). A mitochondrion-targeting transit peptide spans 1–46 (MGLKITKGQLRTKDLNQSSSKSSQSSRIGVDTCIFTRMLPRINTAI).

Associates with the mitochondrial ribosome.

The protein resides in the mitochondrion. In terms of biological role, component of MIOREX complexes, large expressome-like assemblies of ribosomes with factors involved in all the steps of post-transcriptional gene expression. The sequence is that of MIOREX complex component 1 from Saccharomyces cerevisiae (strain ATCC 204508 / S288c) (Baker's yeast).